Here is a 151-residue protein sequence, read N- to C-terminus: MLVYGLYKSPLGYITVAKDDKGFIMLDFCDCVEGNSRDDSSFTEFFHKLDLYFEGKPINLREPINLKTYPFRLSVFKEVMKIPWGKVMTYKQIADSLGTSPRAVGMALSKNPILLIIPCHRVIAENGIGGYSRGVKLKRALLELEGVKIPE.

The active-site Nucleophile; methyl group acceptor is the cysteine 119.

Belongs to the MGMT family.

It localises to the cytoplasm. The catalysed reaction is a 6-O-methyl-2'-deoxyguanosine in DNA + L-cysteinyl-[protein] = S-methyl-L-cysteinyl-[protein] + a 2'-deoxyguanosine in DNA. It catalyses the reaction a 4-O-methyl-thymidine in DNA + L-cysteinyl-[protein] = a thymidine in DNA + S-methyl-L-cysteinyl-[protein]. Functionally, involved in the cellular defense against the biological effects of O6-methylguanine (O6-MeG) and O4-methylthymine (O4-MeT) in DNA. Repairs the methylated nucleobase in DNA by stoichiometrically transferring the methyl group to a cysteine residue in the enzyme. This is a suicide reaction: the enzyme is irreversibly inactivated. This Saccharolobus islandicus (strain L.S.2.15 / Lassen #1) (Sulfolobus islandicus) protein is Methylated-DNA--protein-cysteine methyltransferase.